Here is a 395-residue protein sequence, read N- to C-terminus: GTPase Obg (395 aa).

In terms of domain architecture, Obg spans 1-159 (MQFVDEASII…RNLRFEMKVM (159 aa)). The tract at residues 128 to 147 (IHFKSSTNRAPRKTTPGTEG) is disordered. The OBG-type G domain occupies 160-333 (ADVGLLGVPN…LVQAAHRWLT (174 aa)). GTP contacts are provided by residues 166–173 (GVPNAGKS), 191–195 (FTTLV), 213–216 (DVPG), 283–286 (NKLD), and 314–316 (SAI). 2 residues coordinate Mg(2+): Ser-173 and Thr-193. A compositionally biased stretch (basic and acidic residues) spans 340–368 (AEDETAFEHEREMRRRMEDEAVARAEARM). The interval 340–395 (AEDETAFEHEREMRRRMEDEAVARAEARMSRKRKPAEDDDDDFDEDDYDVEVEYAP) is disordered. Residues 376 to 395 (EDDDDDFDEDDYDVEVEYAP) are compositionally biased toward acidic residues.

This sequence belongs to the TRAFAC class OBG-HflX-like GTPase superfamily. OBG GTPase family. As to quaternary structure, monomer. Requires Mg(2+) as cofactor.

The protein resides in the cytoplasm. Its function is as follows. An essential GTPase which binds GTP, GDP and possibly (p)ppGpp with moderate affinity, with high nucleotide exchange rates and a fairly low GTP hydrolysis rate. Plays a role in control of the cell cycle, stress response, ribosome biogenesis and in those bacteria that undergo differentiation, in morphogenesis control. The polypeptide is GTPase Obg (Chromohalobacter salexigens (strain ATCC BAA-138 / DSM 3043 / CIP 106854 / NCIMB 13768 / 1H11)).